The following is a 249-amino-acid chain: Orotidine 5'-phosphate decarboxylase (249 aa).

Substrate contacts are provided by residues D18, K40, 67-76 (DLKYHDIPNT), T127, R188, Q197, G217, and R218. K69 serves as the catalytic Proton donor.

This sequence belongs to the OMP decarboxylase family. Type 1 subfamily. In terms of assembly, homodimer.

The catalysed reaction is orotidine 5'-phosphate + H(+) = UMP + CO2. The protein operates within pyrimidine metabolism; UMP biosynthesis via de novo pathway; UMP from orotate: step 2/2. In terms of biological role, catalyzes the decarboxylation of orotidine 5'-monophosphate (OMP) to uridine 5'-monophosphate (UMP). The polypeptide is Orotidine 5'-phosphate decarboxylase (Baumannia cicadellinicola subsp. Homalodisca coagulata).